The sequence spans 229 residues: MAPKKKLQLPPPPTDEEEYWDSQAEEVLDEEEEDMMEDWESLDEEASEVEEVSDETPSPSVAFPSPAPQKSATGSSMATTSAPQAPPALPVRRPNRRWDTTGTRAAHTAPAAAAAAATAAATQKQRRPDSKTLTKPKKSTAAAAAGGGALRLAPNEPVSTRELRNRIFPTLYAIFQQSRGQEQELKIKNRSLRSLTRSCLYHKSEDQLRRTLEDAEALFSKYCALTLKD.

The tract at residues 1 to 157 is disordered; the sequence is MAPKKKLQLP…GALRLAPNEP (157 aa). Residues 14–54 show a composition bias toward acidic residues; it reads TDEEEYWDSQAEEVLDEEEEDMMEDWESLDEEASEVEEVSD. Low complexity-rich tracts occupy residues 55 to 64, 71 to 82, and 100 to 122; these read ETPSPSVAFP, SATGSSMATTSA, and TTGT…AAAT. The interval 172-199 is necessary for nuclear subcellular location; that stretch reads YAIFQQSRGQEQELKIKNRSLRSLTRSC. The tract at residues 178-198 is RS-repeat; required for splicing enhancer activity; it reads SRGQEQELKIKNRSLRSLTRS.

The protein belongs to the adenoviridae splicing factor family. Homooligomer. Interacts with DBP; this interaction occurs at a unique vertex during genome packaging. Interacts with IVa2; this interaction occurs at a unique vertex during genome packaging and seems to potentiate IVa2 and 33K oligomerization. In terms of processing, phosphorylated in vitro by human PKA and PRKDC. PRKDC inhibits, whereas PKA activates the splicing factor.

It is found in the host nucleus. Its function is as follows. Promotes alternative splicing of late transcripts by promoting splicing at weak 3' splice sites. Required for the temporal activation of major late pre-mRNA splicing at late times of infection. Induces the splicing and expression of the late capsid vertex protein. Probably functions as the small terminase that is part of the molecular motor that translocates genomic DNA in empty capsid during DNA packaging. This motor is located at a unique vertex and comprises at least the IVa2 ATPase, the small terminase 33K and probably a portal. Forms a ring-like structure of about 17 nm in which genomic DNA is translocated into the capsid. Stimulates IVa2 ATPase activity in the presence of the viral genome. Once the DNA is packaged, the terminase detaches: the 33K protein is present in the empty particles, but not in the mature virions. Also involved in virion assembly. In Homo sapiens (Human), this protein is Protein 33K.